The chain runs to 115 residues: NADH-ubiquinone oxidoreductase chain 3 (115 aa).

A run of 3 helical transmembrane segments spans residues 1–21 (MITLHMVVLPFLITLFLLLII), 55–75 (FFLVAILFILFDLEIILLFPL), and 87–107 (AIILASVFVIILTLGLIYEWL).

This sequence belongs to the complex I subunit 3 family.

The protein localises to the mitochondrion membrane. The enzyme catalyses a ubiquinone + NADH + 5 H(+)(in) = a ubiquinol + NAD(+) + 4 H(+)(out). Core subunit of the mitochondrial membrane respiratory chain NADH dehydrogenase (Complex I) that is believed to belong to the minimal assembly required for catalysis. Complex I functions in the transfer of electrons from NADH to the respiratory chain. The immediate electron acceptor for the enzyme is believed to be ubiquinone. The protein is NADH-ubiquinone oxidoreductase chain 3 (MT-ND3) of Myxine glutinosa (Atlantic hagfish).